The following is a 331-amino-acid chain: Ketol-acid reductoisomerase (NADP(+)) (331 aa).

Residues 2–182 form the KARI N-terminal Rossmann domain; sequence AQLFYDSDAD…GGTRAGILET (181 aa). Residues 25–28, serine 51, serine 53, and 83–86 each bind NADP(+); these read YGSQ and DEFQ. The active site involves histidine 108. NADP(+) is bound at residue glycine 134. Residues 183–328 enclose the KARI C-terminal knotted domain; the sequence is NFKEETETDL…KGLRSMFSWL (146 aa). The Mg(2+) site is built by aspartate 191, glutamate 195, glutamate 227, and glutamate 231. Serine 252 lines the substrate pocket.

It belongs to the ketol-acid reductoisomerase family. Mg(2+) serves as cofactor.

It catalyses the reaction (2R)-2,3-dihydroxy-3-methylbutanoate + NADP(+) = (2S)-2-acetolactate + NADPH + H(+). The catalysed reaction is (2R,3R)-2,3-dihydroxy-3-methylpentanoate + NADP(+) = (S)-2-ethyl-2-hydroxy-3-oxobutanoate + NADPH + H(+). It participates in amino-acid biosynthesis; L-isoleucine biosynthesis; L-isoleucine from 2-oxobutanoate: step 2/4. It functions in the pathway amino-acid biosynthesis; L-valine biosynthesis; L-valine from pyruvate: step 2/4. Involved in the biosynthesis of branched-chain amino acids (BCAA). Catalyzes an alkyl-migration followed by a ketol-acid reduction of (S)-2-acetolactate (S2AL) to yield (R)-2,3-dihydroxy-isovalerate. In the isomerase reaction, S2AL is rearranged via a Mg-dependent methyl migration to produce 3-hydroxy-3-methyl-2-ketobutyrate (HMKB). In the reductase reaction, this 2-ketoacid undergoes a metal-dependent reduction by NADPH to yield (R)-2,3-dihydroxy-isovalerate. This chain is Ketol-acid reductoisomerase (NADP(+)), found in Synechococcus sp. (strain CC9605).